The primary structure comprises 456 residues: Neurexin-3-beta (456 aa).

Positions 1-35 (MHLRIHARRNPPRRPAWTLGIWSLFWGCIVSSVWS) are cleaved as a signal peptide. Topologically, residues 36-381 (SSNVASSSSS…EVIRESSSTT (346 aa)) are extracellular. A disordered region spans residues 41 to 63 (SSSSSPGSHSQHEHHFHGSKHHS). The span at 52–63 (HEHHFHGSKHHS) shows a compositional bias: basic residues. A Laminin G-like domain is found at 82 to 282 (ATYIFGKSGG…NPNIKINGSV (201 aa)). Ca(2+) contacts are provided by D134 and I151. N181 carries an N-linked (GlcNAc...) asparagine glycan. Ca(2+) contacts are provided by I233 and N235. Residues N279 and N323 are each glycosylated (N-linked (GlcNAc...) asparagine). The disordered stretch occupies residues 316–340 (ATTTTRKNRSTASIQPTSDDLVSSA). The span at 325–340 (STASIQPTSDDLVSSA) shows a compositional bias: polar residues. The O-linked (Xyl...) (heparan sulfate) serine glycan is linked to S339. Residues 382-402 (GMVVGIVAAAALCILILLYAM) traverse the membrane as a helical segment. At 403–456 (YKYRNRDEGSYQVDETRNYISNSAQSNGTLLKEKPPSSKGGHKKQKNKDKEYYV) the chain is on the cytoplasmic side. Residues 424 to 456 (NSAQSNGTLLKEKPPSSKGGHKKQKNKDKEYYV) form a disordered region.

This sequence belongs to the neurexin family. Weakly interacts with CBLN1 and CBLN2. Very weak binding, if any, to CBLN4. Specific isoforms bind neuroligins NLGN1, NLGN2 and NLGN3. Interacts with CLSTN3. Post-translationally, processed by alpha-secretase leading to the formation of an extracellular soluble protein as well as a C-terminal membrane-embedded fragment (CTF). Proteolysis of these CTFs by gamma-secretase releases intracellular domains (ICDs) and extracellular peptides. O-glycosylated; contains heparan sulfate. Heparan sulfate attachment is required for synapse development by mediating interactions with neuroligins.

The protein localises to the presynaptic cell membrane. The protein resides in the secreted. In terms of biological role, neuronal cell surface protein that may be involved in cell recognition and cell adhesion. May mediate intracellular signaling. Functions as part of a trans-synaptic complex by binding to cerebellins and postsynaptic GRID1. This interaction helps regulate the activity of NMDA and AMPA receptors at hippocampal synapses without affecting synapse formation. NRXN3B-CBLN2-GRID1 complex transduce presynaptic signals into postsynaptic AMPAR response. This Bos taurus (Bovine) protein is Neurexin-3-beta (NRXN3).